We begin with the raw amino-acid sequence, 83 residues long: Large ribosomal subunit protein bL27 (83 aa).

This sequence belongs to the bacterial ribosomal protein bL27 family.

In Thermotoga maritima (strain ATCC 43589 / DSM 3109 / JCM 10099 / NBRC 100826 / MSB8), this protein is Large ribosomal subunit protein bL27 (rpmA).